The following is a 366-amino-acid chain: Chorismate synthase (366 aa).

Residues Arg-48 and Arg-54 each contribute to the NADP(+) site. Residues 125-127 (RSS), 241-242 (NA), Gly-285, 300-304 (KPTSS), and Arg-326 contribute to the FMN site.

Belongs to the chorismate synthase family. Homotetramer. Requires FMNH2 as cofactor.

The catalysed reaction is 5-O-(1-carboxyvinyl)-3-phosphoshikimate = chorismate + phosphate. The protein operates within metabolic intermediate biosynthesis; chorismate biosynthesis; chorismate from D-erythrose 4-phosphate and phosphoenolpyruvate: step 7/7. Catalyzes the anti-1,4-elimination of the C-3 phosphate and the C-6 proR hydrogen from 5-enolpyruvylshikimate-3-phosphate (EPSP) to yield chorismate, which is the branch point compound that serves as the starting substrate for the three terminal pathways of aromatic amino acid biosynthesis. This reaction introduces a second double bond into the aromatic ring system. This is Chorismate synthase from Cereibacter sphaeroides (strain ATCC 17029 / ATH 2.4.9) (Rhodobacter sphaeroides).